Reading from the N-terminus, the 407-residue chain is Argininosuccinate synthase (407 aa).

ATP is bound by residues Ala16–Ser24 and Ala44. L-citrulline is bound by residues Tyr96 and Ser101. Residue Gly126 coordinates ATP. L-aspartate is bound by residues Thr128, Asn132, and Asp133. Asn132 serves as a coordination point for L-citrulline. L-citrulline contacts are provided by Arg136, Ser185, Ser194, Glu270, and Tyr282.

This sequence belongs to the argininosuccinate synthase family. Type 1 subfamily. In terms of assembly, homotetramer.

It is found in the cytoplasm. The catalysed reaction is L-citrulline + L-aspartate + ATP = 2-(N(omega)-L-arginino)succinate + AMP + diphosphate + H(+). Its pathway is amino-acid biosynthesis; L-arginine biosynthesis; L-arginine from L-ornithine and carbamoyl phosphate: step 2/3. This chain is Argininosuccinate synthase, found in Shewanella frigidimarina (strain NCIMB 400).